Here is a 36-residue protein sequence, read N- to C-terminus: Dermonecrotic toxin LgSicTox-beta-LOXN2 (36 aa).

The protein belongs to the arthropod phospholipase D family. Class II subfamily. Mg(2+) is required as a cofactor. Post-translationally, contains 2 disulfide bonds. Expressed by the venom gland.

It is found in the secreted. It catalyses the reaction an N-(acyl)-sphingosylphosphocholine = an N-(acyl)-sphingosyl-1,3-cyclic phosphate + choline. It carries out the reaction an N-(acyl)-sphingosylphosphoethanolamine = an N-(acyl)-sphingosyl-1,3-cyclic phosphate + ethanolamine. The enzyme catalyses a 1-acyl-sn-glycero-3-phosphocholine = a 1-acyl-sn-glycero-2,3-cyclic phosphate + choline. The catalysed reaction is a 1-acyl-sn-glycero-3-phosphoethanolamine = a 1-acyl-sn-glycero-2,3-cyclic phosphate + ethanolamine. Functionally, dermonecrotic toxins cleave the phosphodiester linkage between the phosphate and headgroup of certain phospholipids (sphingolipid and lysolipid substrates), forming an alcohol (often choline) and a cyclic phosphate. This toxin acts on sphingomyelin (SM). It may also act on ceramide phosphoethanolamine (CPE), lysophosphatidylcholine (LPC) and lysophosphatidylethanolamine (LPE), but not on lysophosphatidylserine (LPS), and lysophosphatidylglycerol (LPG). It acts by transphosphatidylation, releasing exclusively cyclic phosphate products as second products. Induces dermonecrosis, hemolysis, increased vascular permeability, edema, inflammatory response, and platelet aggregation. This is Dermonecrotic toxin LgSicTox-beta-LOXN2 from Loxosceles gaucho (Spider).